A 137-amino-acid polypeptide reads, in one-letter code: ATP synthase epsilon chain, chloroplastic (137 aa).

It belongs to the ATPase epsilon chain family. As to quaternary structure, F-type ATPases have 2 components, CF(1) - the catalytic core - and CF(0) - the membrane proton channel. CF(1) has five subunits: alpha(3), beta(3), gamma(1), delta(1), epsilon(1). CF(0) has three main subunits: a, b and c.

It is found in the plastid. It localises to the chloroplast thylakoid membrane. Its function is as follows. Produces ATP from ADP in the presence of a proton gradient across the membrane. The polypeptide is ATP synthase epsilon chain, chloroplastic (Sorghum bicolor (Sorghum)).